Consider the following 351-residue polypeptide: Phosphoribosylformylglycinamidine cyclo-ligase (351 aa).

It belongs to the AIR synthase family.

Its subcellular location is the cytoplasm. It carries out the reaction 2-formamido-N(1)-(5-O-phospho-beta-D-ribosyl)acetamidine + ATP = 5-amino-1-(5-phospho-beta-D-ribosyl)imidazole + ADP + phosphate + H(+). It functions in the pathway purine metabolism; IMP biosynthesis via de novo pathway; 5-amino-1-(5-phospho-D-ribosyl)imidazole from N(2)-formyl-N(1)-(5-phospho-D-ribosyl)glycinamide: step 2/2. This Idiomarina loihiensis (strain ATCC BAA-735 / DSM 15497 / L2-TR) protein is Phosphoribosylformylglycinamidine cyclo-ligase.